A 412-amino-acid polypeptide reads, in one-letter code: Argininosuccinate synthase (412 aa).

ATP contacts are provided by residues 20–28 and Ala48; that span reads AYSGGLDTS. The L-citrulline site is built by Tyr100 and Ser105. Gly130 lines the ATP pocket. Thr132, Asn136, and Asp137 together coordinate L-aspartate. Asn136 contacts L-citrulline. Residues Arg140, Ser189, Ser198, Glu274, and Tyr286 each contribute to the L-citrulline site.

The protein belongs to the argininosuccinate synthase family. Type 1 subfamily. Homotetramer.

The protein resides in the cytoplasm. The catalysed reaction is L-citrulline + L-aspartate + ATP = 2-(N(omega)-L-arginino)succinate + AMP + diphosphate + H(+). The protein operates within amino-acid biosynthesis; L-arginine biosynthesis; L-arginine from L-ornithine and carbamoyl phosphate: step 2/3. In Shewanella halifaxensis (strain HAW-EB4), this protein is Argininosuccinate synthase.